The following is a 1144-amino-acid chain: Alpha-mannosidase 2 (1144 aa).

The Cytoplasmic portion of the chain corresponds to 1-5 (MKLSR). Residues 6-26 (QFTVFGSAIFCVVIFSLYLML) form a helical; Signal-anchor for type II membrane protein membrane-spanning segment. At 27–1144 (DRGHLDYPRN…EISTFRIQLR (1118 aa)) the chain is on the lumenal side. The N-linked (GlcNAc...) asparagine glycan is linked to Asn78. Ser80 and Ser82 each carry phosphoserine. A glycan (N-linked (GlcNAc...) asparagine) is linked at Asn93. Positions 175, 177, 289, and 569 each coordinate Zn(2+). The active-site Nucleophile is the Asp289. Asn1125 carries N-linked (GlcNAc...) asparagine glycosylation.

The protein belongs to the glycosyl hydrolase 38 family. Homodimer; disulfide-linked. The cofactor is Zn(2+). Glycosylated.

It is found in the golgi apparatus membrane. The catalysed reaction is N(4)-{beta-D-GlcNAc-(1-&gt;2)-alpha-D-Man-(1-&gt;3)-[alpha-D-Man-(1-&gt;3)-[alpha-D-Man-(1-&gt;6)]-alpha-D-Man-(1-&gt;6)]-beta-D-Man-(1-&gt;4)-beta-D-GlcNAc-(1-&gt;4)-beta-D-GlcNAc}-L-asparaginyl-[protein] + 2 H2O = 2 alpha-D-mannopyranose + an N(4)-{beta-D-GlcNAc-(1-&gt;2)-alpha-D-Man-(1-&gt;3)-[alpha-D-Man-(1-&gt;6)]-beta-D-Man-(1-&gt;4)-beta-D-GlcNAc-(1-&gt;4)-beta-D-GlcNAc}-L-asparaginyl-[protein]. Its pathway is protein modification; protein glycosylation. In terms of biological role, catalyzes the first committed step in the biosynthesis of complex N-glycans. It controls conversion of high mannose to complex N-glycans; the final hydrolytic step in the N-glycan maturation pathway. The polypeptide is Alpha-mannosidase 2 (MAN2A1) (Homo sapiens (Human)).